The following is a 516-amino-acid chain: Endo-acting ulvan lyase (516 aa).

An N-terminal signal peptide occupies residues 1-24 (MLEKTTLKNIILIHFLMFLAVVTA). Cys38 and Cys65 form a disulfide bridge. Ca(2+) contacts are provided by Gly42, Asn44, Asp62, Ser64, Ala67, and Asn68. Tyr138 serves as a coordination point for substrate. Catalysis depends on Lys143, which acts as the Proton acceptor. Residues 191–195 (EGDGR) and 260–263 (YRVK) contribute to the substrate site. Catalysis depends on Tyr260, which acts as the Proton donor/acceptor. Residues 289 to 429 (PIGDVYKLKN…VWKAIAVESL (141 aa)) are ulvan-binding domain. Residues 430 to 516 (SVDENAILAS…NKYHKKLIVK (87 aa)) constitute a propeptide, removed by the type IX secretion system (T9SS).

This sequence belongs to the polysaccharide lyase 28 family. Ca(2+) serves as cofactor.

Its subcellular location is the secreted. Functionally, ulvan lyase involved in ulvan degradation. Ulvan is the main polysaccharide component of the Ulvales (green seaweed) cell wall. It is composed of disaccharide building blocks comprising 3-sulfated rhamnose (Rha3S) linked to D-glucuronic acid (GlcA), L-iduronic acid (IduA), or D-xylose (Xyl). Ulvan lyase catalyzes the endolytic cleavage of the glycosidic bond between Rha3S and the uronic acids GlcA or IduA, producing oligosaccharides that have unsaturated 4-deoxy-L-threo-hex-4-enopyranosiduronic acid (deltaUA) at the non-reducing end. This results eventually in the degradation of the ulvan polysaccharide into deltaUA-Rha3S disaccharides and deltaUA-Rha3S-Xyl-Rha3S tetrasaccharides. The chain is Endo-acting ulvan lyase from Formosa agariphila (strain DSM 15362 / KCTC 12365 / LMG 23005 / KMM 3901 / M-2Alg 35-1).